The chain runs to 188 residues: EIEFTRTMHGIMRNISHFCSRTKSRTWGKDGWQKIVVCVIADGRQKVHPRTLNALAALGVYQDGIAKNIVNQKEVTAHVYEYTTQVSLDEGMKFKGAEKGIVPCQMIFCLKEQNKKKLNSHRWFFNAFGRALTPNVCILLDVGTKPDSKALYHLWKAFDQDSNVAGAAGEIKADKGKGWMCLLNPLVS.

It belongs to the chitin synthase family.

The protein localises to the cell membrane. It catalyses the reaction [(1-&gt;4)-N-acetyl-beta-D-glucosaminyl](n) + UDP-N-acetyl-alpha-D-glucosamine = [(1-&gt;4)-N-acetyl-beta-D-glucosaminyl](n+1) + UDP + H(+). Polymerizes chitin, a structural polymer of the cell wall and septum, by transferring the sugar moiety of UDP-GlcNAc to the non-reducing end of the growing chitin polymer. The chain is Chitin synthase 2 (CHS2) from Exophiala jeanselmei (Dematiaceous fungus).